Here is a 1230-residue protein sequence, read N- to C-terminus: Serine/threonine-protein kinase CST20 (1230 aa).

Residues 1 to 20 (MSILSENNPTPTSITDPNKS) show a composition bias toward polar residues. 2 disordered regions span residues 1–384 (MSIL…TAHN) and 413–470 (SSLE…HSQE). Low complexity-rich tracts occupy residues 57-70 (NTTS…SLGS) and 96-125 (SGSG…NPES). Positions 150–161 (HQGDDSDNEKQY) are enriched in basic and acidic residues. Polar residues-rich tracts occupy residues 175–197 (DSYS…NNVS), 207–224 (TSSL…NENA), and 237–246 (PTSKTSSFHD). Positions 248–257 (SSVISSSTSV) are enriched in low complexity. 2 stretches are compositionally biased toward polar residues: residues 262–277 (SNPT…SYKS) and 311–330 (DTLS…TLQG). Composition is skewed to low complexity over residues 349–381 (NTSA…STST) and 439–468 (KVRG…NSHS). The CRIB domain occupies 475 to 488 (ISTPFNAKHLAHVG). Disordered regions lie at residues 545–831 (FHFD…ALAD) and 867–919 (LREK…KQAA). Positions 550-561 (NKSSSSGWSNEN) are enriched in polar residues. Positions 570–581 (SNSGSGSGGGGA) are enriched in gly residues. Residues 604-613 (ITPSQSMPTK) show a composition bias toward polar residues. A compositionally biased stretch (basic and acidic residues) spans 614-628 (TESKQSENQHPHEDN). Residues 629–642 (ATQYTPRTPTSHVQ) show a composition bias toward polar residues. Composition is skewed to low complexity over residues 670-683 (PSSQ…SQSD), 696-710 (SPSK…SKSL), and 736-749 (SIPK…SLSS). The segment covering 750 to 761 (QLRPATNGSTTA) has biased composition (polar residues). Over residues 789 to 807 (APPPPPSAPPAPPVPPAPP) the composition is skewed to pro residues. Positions 811–826 (LSEQTSEIPQQRTAPS) are enriched in polar residues. Residues 867-876 (LREKNERQNR) show a composition bias toward basic and acidic residues. The span at 877 to 892 (QQETGQNNADTASGGS) shows a compositional bias: polar residues. A Protein kinase domain is found at 953–1205 (YVDLVKIGQG…ADELLHDNFI (253 aa)). Residues 959-967 (IGQGASGGV) and lysine 983 contribute to the ATP site. Aspartate 1073 serves as the catalytic Proton acceptor.

Belongs to the protein kinase superfamily. STE Ser/Thr protein kinase family. STE20 subfamily.

It is found in the cytoplasm. The protein localises to the nucleus. It carries out the reaction L-seryl-[protein] + ATP = O-phospho-L-seryl-[protein] + ADP + H(+). The enzyme catalyses L-threonyl-[protein] + ATP = O-phospho-L-threonyl-[protein] + ADP + H(+). Functionally, MAP4K component of the MAPK pathway required for the mating pheromone response, and the regulation of cell polarity and cell cycle. Phosphorylates histone H2B to form H2BS10ph. Required for hyphal formation and virulence. The sequence is that of Serine/threonine-protein kinase CST20 (CST20) from Candida albicans (Yeast).